Here is a 247-residue protein sequence, read N- to C-terminus: NH(3)-dependent NAD(+) synthetase (247 aa).

29–36 (GISGGIDS) is an ATP binding site. Residue aspartate 35 participates in Mg(2+) binding. Arginine 120 provides a ligand contact to deamido-NAD(+). Threonine 140 contributes to the ATP binding site. Glutamate 145 contributes to the Mg(2+) binding site. Positions 153 and 160 each coordinate deamido-NAD(+). Positions 169 and 191 each coordinate ATP. Residue 237-238 (HK) participates in deamido-NAD(+) binding.

Belongs to the NAD synthetase family. Homodimer.

The catalysed reaction is deamido-NAD(+) + NH4(+) + ATP = AMP + diphosphate + NAD(+) + H(+). Its pathway is cofactor biosynthesis; NAD(+) biosynthesis; NAD(+) from deamido-NAD(+) (ammonia route): step 1/1. Catalyzes the ATP-dependent amidation of deamido-NAD to form NAD. Uses ammonia as a nitrogen source. The chain is NH(3)-dependent NAD(+) synthetase from Alkaliphilus metalliredigens (strain QYMF).